A 282-amino-acid chain; its full sequence is MALFGAHVSSAGSILKTFKRAKDIGAEVFQFFLRSPRAWYWKGVDKETKQAFIEKLKDFKNPVMVHAPYLLNLASPNEELREKSVKVFLEELKFCDEVGIHFYNFHPGTAKGISDEEGLRNVIKSLEEVFSEYTPKFTTVLLENTAGERGDLGKNFKELKEIMNVFRGIKLGVCLDTCHAFAYGYEINTKEGFENFKREIEKMVGLESVKAVHANDSKVPLGGRKDRHEHIGKGYIGLEGFKNLLKDEYFSTLPYYIETPKENNMDPVNLSVLREIYQNNDL.

9 residues coordinate Zn(2+): histidine 66, histidine 106, glutamate 143, aspartate 176, histidine 179, histidine 213, aspartate 226, histidine 228, and glutamate 258.

The protein belongs to the AP endonuclease 2 family. The cofactor is Zn(2+).

The catalysed reaction is Endonucleolytic cleavage to 5'-phosphooligonucleotide end-products.. Functionally, endonuclease IV plays a role in DNA repair. It cleaves phosphodiester bonds at apurinic or apyrimidinic (AP) sites, generating a 3'-hydroxyl group and a 5'-terminal sugar phosphate. The sequence is that of Probable endonuclease 4 from Aquifex aeolicus (strain VF5).